A 368-amino-acid polypeptide reads, in one-letter code: Nicotinamide/nicotinic acid mononucleotide adenylyltransferase (368 aa).

The segment covering 1–14 has biased composition (polar residues); the sequence is MHTMNGDNFANSFP. Positions 1–25 are disordered; the sequence is MHTMNGDNFANSFPKNPLLSRNSSS. Residue serine 36 is modified to Phosphoserine. The interval 47–78 is disordered; the sequence is AKEHEERIRRPSVNRAWQKNSTSGGPSVSLEK. Residues 61-72 show a composition bias toward polar residues; that stretch reads RAWQKNSTSGGP. Residues serine 75 and serine 85 each carry the phosphoserine modification. Positions 135 and 136 each coordinate NAD(+). An ATP-binding site is contributed by histidine 143. Residues threonine 215, glycine 250, aspartate 252, tryptophan 263, arginine 282, and asparagine 313 each contribute to the NAD(+) site. 318–321 is an ATP binding site; sequence TKVR.

This sequence belongs to the eukaryotic NMN adenylyltransferase family. It depends on a divalent metal cation as a cofactor.

The protein resides in the cytoplasm. Its subcellular location is the nucleus. The enzyme catalyses beta-nicotinamide D-ribonucleotide + ATP + H(+) = diphosphate + NAD(+). It carries out the reaction nicotinate beta-D-ribonucleotide + ATP + H(+) = deamido-NAD(+) + diphosphate. It functions in the pathway cofactor biosynthesis; NAD(+) biosynthesis; deamido-NAD(+) from nicotinate D-ribonucleotide: step 1/1. Its pathway is cofactor biosynthesis; NAD(+) biosynthesis; NAD(+) from nicotinamide D-ribonucleotide: step 1/1. Functionally, catalyzes the formation of NAD(+) from nicotinamide mononucleotide (NMN) and ATP. Can also use the deamidated form; nicotinic acid mononucleotide (NaMN) as substrate to form deamido-NAD(+) (NaAD). Key enzyme in both de novo and salvage pathways for NAD(+) biosynthesis. The chain is Nicotinamide/nicotinic acid mononucleotide adenylyltransferase from Schizosaccharomyces pombe (strain 972 / ATCC 24843) (Fission yeast).